Reading from the N-terminus, the 336-residue chain is UDP-N-acetylenolpyruvoylglucosamine reductase (336 aa).

The region spanning 1-178 is the FAD-binding PCMH-type domain; sequence MAHSLQTLHT…TTVHLALPKE (178 aa). Residue arginine 154 is part of the active site. Serine 222 acts as the Proton donor in catalysis. Glutamate 318 is a catalytic residue.

Belongs to the MurB family. It depends on FAD as a cofactor.

The protein localises to the cytoplasm. It catalyses the reaction UDP-N-acetyl-alpha-D-muramate + NADP(+) = UDP-N-acetyl-3-O-(1-carboxyvinyl)-alpha-D-glucosamine + NADPH + H(+). The protein operates within cell wall biogenesis; peptidoglycan biosynthesis. In terms of biological role, cell wall formation. This is UDP-N-acetylenolpyruvoylglucosamine reductase from Pseudoalteromonas translucida (strain TAC 125).